The sequence spans 209 residues: Probable glutathione peroxidase 8-A (209 aa).

The helical transmembrane segment at 18–40 threads the bilayer; that stretch reads VSVVFLSMLLCTGILCVLQLGFL. C79 is an active-site residue.

This sequence belongs to the glutathione peroxidase family.

Its subcellular location is the membrane. The catalysed reaction is 2 glutathione + H2O2 = glutathione disulfide + 2 H2O. This Xenopus laevis (African clawed frog) protein is Probable glutathione peroxidase 8-A (gpx8-a).